The following is a 189-amino-acid chain: Peptidyl-tRNA hydrolase (189 aa).

TRNA is bound at residue Tyr14. His19 serves as the catalytic Proton acceptor. Residues Tyr64, Asn66, and Asn112 each coordinate tRNA.

It belongs to the PTH family. As to quaternary structure, monomer.

The protein localises to the cytoplasm. It catalyses the reaction an N-acyl-L-alpha-aminoacyl-tRNA + H2O = an N-acyl-L-amino acid + a tRNA + H(+). Its function is as follows. Hydrolyzes ribosome-free peptidyl-tRNAs (with 1 or more amino acids incorporated), which drop off the ribosome during protein synthesis, or as a result of ribosome stalling. Functionally, catalyzes the release of premature peptidyl moieties from peptidyl-tRNA molecules trapped in stalled 50S ribosomal subunits, and thus maintains levels of free tRNAs and 50S ribosomes. The chain is Peptidyl-tRNA hydrolase from Clostridium botulinum (strain 657 / Type Ba4).